Reading from the N-terminus, the 292-residue chain is MAAAAAAVAGAGRGGGGGADPGQERSRARSWVGAERSEGRRMEPNEELEEEDSPGGREDGFTAEHLAAEAMAADMDPWLVFDARTTPATELDAWLAKYPPSQVTRYGDPGSPNSEPVGWIAAYGQGYTPNSGDVQGLQAAWEALQTSGRPITPGTLRQLAITHHVLSGKWLIHLAPGFKLDHAWAGIARAVVEGRLQVAKVSPRAKEGGRQVICVYTDDFTDRLGVLEADSAIRAAGIKCLLTYKPDVYTYLGIYRANRWHLCPTLYESRFQLGGNARGSRVLDRANNVELT.

A compositionally biased stretch (low complexity) spans 1-10 (MAAAAAAVAG). Residues 1 to 60 (MAAAAAAVAGAGRGGGGGADPGQERSRARSWVGAERSEGRRMEPNEELEEEDSPGGREDG) form a disordered region. A compositionally biased stretch (gly residues) spans 11-20 (AGRGGGGGAD). Residues 35–44 (ERSEGRRMEP) are compositionally biased toward basic and acidic residues.

It belongs to the UPF0696 family.

In Rattus norvegicus (Rat), this protein is UPF0696 protein C11orf68 homolog (Bles03).